The chain runs to 21 residues: Histone H2B 1 (21 aa).

Residues 1–21 (MPDPAKTAPKKGSKKAVTKXA) form a disordered region. N6-acetyllysine occurs at positions 6 and 11. Residues 8 to 21 (APKKGSKKAVTKXA) show a composition bias toward basic residues. Serine 13 is subject to Phosphoserine. Lysine 14 and lysine 19 each carry N6-acetyllysine. Residue lysine 19 forms a Glycyl lysine isopeptide (Lys-Gly) (interchain with G-Cter in ubiquitin) linkage.

Belongs to the histone H2B family. The nucleosome is a histone octamer containing two molecules each of H2A, H2B, H3 and H4 assembled in one H3-H4 heterotetramer and two H2A-H2B heterodimers. The octamer wraps approximately 147 bp of DNA. In terms of processing, monoubiquitination at the C-terminal Lys gives a specific tag for epigenetic transcriptional activation and is also prerequisite for histone H3 'Lys-4' and 'Lys-79' methylation. Phosphorylated during apoptosis; which facilitates apoptotic chromatin condensation.

It is found in the nucleus. The protein localises to the chromosome. In terms of biological role, core component of nucleosome. Nucleosomes wrap and compact DNA into chromatin, limiting DNA accessibility to the cellular machineries which require DNA as a template. Histones thereby play a central role in transcription regulation, DNA repair, DNA replication and chromosomal stability. DNA accessibility is regulated via a complex set of post-translational modifications of histones, also called histone code, and nucleosome remodeling. Its function is as follows. Has broad-spectrum antimicrobial and antibacterial activity. It is important in the antimicrobial defenses of fish skin and possesses strong activity against saprolegnia, the most common fungal infection in fish. It is also inhibitory to fish bacterial pathogens, such as aeromonas hydrophila, vibrio alginolyticus and E.coli D31. This is Histone H2B 1 from Ictalurus punctatus (Channel catfish).